Here is a 1407-residue protein sequence, read N- to C-terminus: Trichohyalin (1407 aa).

The S-100-like stretch occupies residues 1 to 91 (MSPLLKSIID…AQAAYYALGQ (91 aa)). EF-hand domains are found at residues 23–48 (CDGA…LQRP) and 49–84 (HDPE…LAQA). Residues D32, D62, D64, D66, and E73 each coordinate Ca(2+). 7 disordered regions span residues 148–172 (EEEE…DKEQ), 218–237 (LREE…RALQ), 362–471 (REQA…EEEQ), 486–587 (EQLQ…ERER), 1014–1033 (REEE…EEER), 1062–1082 (KEEK…EEQQ), and 1313–1407 (EQFA…QYRP). 4 stretches are compositionally biased toward basic and acidic residues: residues 362–381 (REQA…RQLE), 396–424 (RRQE…EQAR), 447–471 (SLRE…EEEQ), and 554–587 (QREK…ERER). Residues 1313-1376 (EQFAREEKSR…FREDQSRRQV (64 aa)) are compositionally biased toward basic and acidic residues.

The protein belongs to the S100-fused protein family. Homodimer. Post-translationally, substrate of transglutaminase. Some 200 arginines are probably converted to citrullines by peptidylarginine deimidase. As to expression, found in the hard keratinizing tissues such as the inner root sheath (IRS) of hair follicles and medulla, and in the filiform papillae of dorsal tongue epithelium.

Intermediate filament-associated protein that associates in regular arrays with keratin intermediate filaments (KIF) of the inner root sheath cells of the hair follicle and the granular layer of the epidermis. It later becomes cross-linked to KIF by isodipeptide bonds. It may serve as scaffold protein, together with involucrin, in the organization of the cell envelope or even anchor the cell envelope to the KIF network. It may be involved in its own calcium-dependent postsynthetic processing during terminal differentiation. The chain is Trichohyalin (TCHH) from Oryctolagus cuniculus (Rabbit).